The sequence spans 133 residues: ATP synthase epsilon chain, chloroplastic (133 aa).

The protein belongs to the ATPase epsilon chain family. As to quaternary structure, F-type ATPases have 2 components, CF(1) - the catalytic core - and CF(0) - the membrane proton channel. CF(1) has five subunits: alpha(3), beta(3), gamma(1), delta(1), epsilon(1). CF(0) has three main subunits: a, b and c.

The protein resides in the plastid. It is found in the chloroplast thylakoid membrane. Functionally, produces ATP from ADP in the presence of a proton gradient across the membrane. In Lactuca sativa (Garden lettuce), this protein is ATP synthase epsilon chain, chloroplastic.